The sequence spans 159 residues: MKSQWSNFHQIGRNSFLAASTVYVSNEFNFLNTSLLNRRSFCFAEGDRSSFVVLKSEAEFNSALSKARDGSLPSVFYFTAAWCGPCRLISPVILELSNKYPDVTTYKVDIDEGGLSNAIGKLNVSAVPTLQFFKGGVKKAEIVGVDVVRLKSVMEQLYK.

Position 40 is a phosphoserine (Ser40). Residues 43–159 form the Thioredoxin domain; the sequence is FAEGDRSSFV…LKSVMEQLYK (117 aa). Active-site nucleophile residues include Cys83 and Cys86. A disulfide bond links Cys83 and Cys86.

It belongs to the thioredoxin family. Plant O-type subfamily.

It localises to the mitochondrion. Functionally, thiol-disulfide oxidoreductase that may participate in various redox reactions. Possesses insulin disulfide bonds reducing activity. Reduced by thioredoxin reductases NTRA and NTRB. The polypeptide is Thioredoxin O2, mitochondrial (Arabidopsis thaliana (Mouse-ear cress)).